Here is a 217-residue protein sequence, read N- to C-terminus: Transmembrane protein 253 (217 aa).

4 consecutive transmembrane segments (helical) span residues 33 to 53 (LVLA…AVSV), 62 to 82 (MATA…TVTL), 96 to 116 (MMIF…VEVM), and 138 to 158 (LSAE…LFLL). Residues 187–217 (PGLENGPTVASTGANERVGQREQTRAALLPP) form a disordered region.

It localises to the membrane. The protein is Transmembrane protein 253 (TMEM253) of Homo sapiens (Human).